Reading from the N-terminus, the 132-residue chain is Arginine decarboxylase proenzyme (132 aa).

Serine 70 (schiff-base intermediate with substrate; via pyruvic acid) is an active-site residue. A Pyruvic acid (Ser); by autocatalysis modification is found at serine 70. Histidine 75 functions as the Proton acceptor; for processing activity in the catalytic mechanism. The active-site Proton donor; for catalytic activity is cysteine 90.

Belongs to the prokaryotic AdoMetDC family. Type 1 subfamily. As to quaternary structure, heterooctamer of four alpha and four beta chains arranged as a tetramer of alpha/beta heterodimers. The cofactor is pyruvate. Post-translationally, is synthesized initially as an inactive proenzyme. Formation of the active enzyme involves a self-maturation process in which the active site pyruvoyl group is generated from an internal serine residue via an autocatalytic post-translational modification. Two non-identical subunits are generated from the proenzyme in this reaction, and the pyruvate is formed at the N-terminus of the alpha chain, which is derived from the carboxyl end of the proenzyme. The post-translation cleavage follows an unusual pathway, termed non-hydrolytic serinolysis, in which the side chain hydroxyl group of the serine supplies its oxygen atom to form the C-terminus of the beta chain, while the remainder of the serine residue undergoes an oxidative deamination to produce ammonia and the pyruvoyl group blocking the N-terminus of the alpha chain.

It catalyses the reaction L-arginine + H(+) = agmatine + CO2. The protein operates within amine and polyamine biosynthesis; agmatine biosynthesis; agmatine from L-arginine: step 1/1. Specifically catalyzes the decarboxylation of L-arginine to agmatine. Has no S-adenosylmethionine decarboxylase (AdoMetDC) activity. This chain is Arginine decarboxylase proenzyme, found in Aeropyrum pernix (strain ATCC 700893 / DSM 11879 / JCM 9820 / NBRC 100138 / K1).